The primary structure comprises 591 residues: Glutathione hydrolase (591 aa).

A signal peptide spans 1–41; that stretch reads MASKWIEEQPLVHRRDIRISSKSRIAAGLLVLLVLWRYGLP. Position 122 (arginine 122) interacts with L-glutamate. Residues asparagine 135, asparagine 270, and asparagine 389 are each glycosylated (N-linked (GlcNAc...) asparagine). The active-site Nucleophile is the threonine 393. L-glutamate-binding positions include threonine 411, glutamate 432, and 464–465; that span reads SA. Residue asparagine 534 is glycosylated (N-linked (GlcNAc...) asparagine).

This sequence belongs to the gamma-glutamyltransferase family.

It carries out the reaction an N-terminal (5-L-glutamyl)-[peptide] + an alpha-amino acid = 5-L-glutamyl amino acid + an N-terminal L-alpha-aminoacyl-[peptide]. The catalysed reaction is glutathione + H2O = L-cysteinylglycine + L-glutamate. It catalyses the reaction an S-substituted glutathione + H2O = an S-substituted L-cysteinylglycine + L-glutamate. It functions in the pathway mycotoxin biosynthesis. In terms of biological role, gamma-glutamyltransferase; part of the gene cluster that mediates the biosynthesis of the secondary metabolite ustiloxin B, an antimitotic tetrapeptide. First, ustA is processed by the subtilisin-like endoprotease Kex2 that is outside the ustiloxin B gene cluster, at the C-terminal side of Arg-Lys, after transfer to Golgi apparatus through the endoplasmic reticulum (ER). Cleavage by KEX2 generates 16 peptides YAIG-I to YAIG-XVI. To process the precursor peptide further, at least two peptidases are necessary to cleave the N-terminal and C-terminal sides of the Tyr-Ala-Ile-Gly core peptide which serves as backbone for the synthesis of ustiloxin B, through cyclization and modification of the tyrosine with a non-protein coding amino acid, norvaline. One of the two peptidases must be the serine peptidase ustP; and the other pepdidase is probably ustH. Macrocyclization of the core peptide derived from ustA requires the tyrosinase ustQ, as well as the homologous oxidases ustYa and ustYb, and leads to the production of the first cyclization product N-desmethylustiloxin F. For the formation of N-desmethylustiloxin F, three oxidation steps are required, hydroxylation at the benzylic position, hydroxylation at either the aromatic ring of Tyr or beta-position of Ile, and oxidative cyclization. UstQ may catalyze the oxidation of a phenol moiety, whereas the ustYa and ustYb are most likely responsible for the remaining two-step oxidations. N-desmethylustiloxin F is then methylated by ustM to yield ustiloxin F which in turn substrate of the cytochrome P450 monooxygenase ustC which catalyzes the formation of S-deoxyustiloxin H. The flavoprotein monooxygenases ustF1 and ustF2 then participate in the modification of the side chain of S-deoxyustiloxin H, leading to the synthesis of an oxime intermediate, via ustiloxin H. Finally, carboxylative dehydration performed by the cysteine desulfurase-like protein ustD yields ustiloxin B. This Aspergillus flavus (strain ATCC 200026 / FGSC A1120 / IAM 13836 / NRRL 3357 / JCM 12722 / SRRC 167) protein is Glutathione hydrolase.